The chain runs to 380 residues: Cytochrome b (380 aa).

Transmembrane regions (helical) follow at residues 34-54, 78-99, 114-134, and 179-199; these read FGSL…FLAM, WLLR…YFHI, WNIG…GYVL, and FFTF…IHLL. Heme b is bound by residues histidine 84 and histidine 98. Residues histidine 183 and histidine 197 each contribute to the heme b site. Histidine 202 contacts a ubiquinone. The next 4 helical transmembrane spans lie at 227–247, 289–309, 321–341, and 348–368; these read YKDL…STFA, LGGV…PIIH, IAKT…WIGG, and FITI…LLIP.

Belongs to the cytochrome b family. In terms of assembly, the cytochrome bc1 complex contains 3 respiratory subunits (MT-CYB, CYC1 and UQCRFS1), 2 core proteins (UQCRC1 and UQCRC2) and probably 6 low-molecular weight proteins. The cofactor is heme b.

It is found in the mitochondrion inner membrane. Its function is as follows. Component of the ubiquinol-cytochrome c reductase complex (complex III or cytochrome b-c1 complex) that is part of the mitochondrial respiratory chain. The b-c1 complex mediates electron transfer from ubiquinol to cytochrome c. Contributes to the generation of a proton gradient across the mitochondrial membrane that is then used for ATP synthesis. The sequence is that of Cytochrome b (mt-cyb) from Pelophylax nigromaculatus (Black-spotted frog).